Here is a 68-residue protein sequence, read N- to C-terminus: Prokaryotic ubiquitin-like protein Pup (68 aa).

The disordered stretch occupies residues 1–37; sequence MAQERIFGTGSRREDEPDTPAPVDPPVSGAAQAQRDM. Residues 24–62 form an ARC ATPase binding region; the sequence is DPPVSGAAQAQRDMQGTDDLLAEIDGVLETNAEAFVKGF. At Q68 the chain carries Deamidated glutamine. Q68 participates in a covalent cross-link: Isoglutamyl lysine isopeptide (Gln-Lys) (interchain with K-? in acceptor proteins).

This sequence belongs to the prokaryotic ubiquitin-like protein family. As to quaternary structure, strongly interacts with the proteasome-associated ATPase ARC through a hydrophobic interface; the interacting region of Pup lies in its C-terminal half. There is one Pup binding site per ARC hexamer ring. Post-translationally, is modified by deamidation of its C-terminal glutamine to glutamate by the deamidase Dop, a prerequisite to the subsequent pupylation process.

The protein operates within protein degradation; proteasomal Pup-dependent pathway. In terms of biological role, protein modifier that is covalently attached to lysine residues of substrate proteins, thereby targeting them for proteasomal degradation. The tagging system is termed pupylation. This is Prokaryotic ubiquitin-like protein Pup from Kocuria rhizophila (strain ATCC 9341 / DSM 348 / NBRC 103217 / DC2201).